The chain runs to 163 residues: Cyclic pyranopterin monophosphate synthase (163 aa).

Residues 76-78 and 114-115 each bind substrate; these read LCH and ME. Residue aspartate 129 is part of the active site.

Belongs to the MoaC family. In terms of assembly, homohexamer; trimer of dimers.

It catalyses the reaction (8S)-3',8-cyclo-7,8-dihydroguanosine 5'-triphosphate = cyclic pyranopterin phosphate + diphosphate. Its pathway is cofactor biosynthesis; molybdopterin biosynthesis. Its function is as follows. Catalyzes the conversion of (8S)-3',8-cyclo-7,8-dihydroguanosine 5'-triphosphate to cyclic pyranopterin monophosphate (cPMP). This Desulfovibrio desulfuricans (strain ATCC 27774 / DSM 6949 / MB) protein is Cyclic pyranopterin monophosphate synthase.